Consider the following 263-residue polypeptide: UPF0739 protein C1orf74 homolog (263 aa).

It belongs to the UPF0739 family.

This chain is UPF0739 protein C1orf74 homolog, found in Mus musculus (Mouse).